The chain runs to 204 residues: Cytochrome c biogenesis ATP-binding export protein CcmA (204 aa).

Residues 2–203 enclose the ABC transporter domain; it reads LEADNLECVR…PAGTVRELRL (202 aa). 34 to 41 serves as a coordination point for ATP; sequence GRNGAGKT.

Belongs to the ABC transporter superfamily. CcmA exporter (TC 3.A.1.107) family. In terms of assembly, the complex is composed of two ATP-binding proteins (CcmA) and two transmembrane proteins (CcmB).

It is found in the cell inner membrane. The catalysed reaction is heme b(in) + ATP + H2O = heme b(out) + ADP + phosphate + H(+). Its function is as follows. Part of the ABC transporter complex CcmAB involved in the biogenesis of c-type cytochromes; once thought to export heme, this seems not to be the case, but its exact role is uncertain. Responsible for energy coupling to the transport system. The chain is Cytochrome c biogenesis ATP-binding export protein CcmA from Dechloromonas aromatica (strain RCB).